Here is a 320-residue protein sequence, read N- to C-terminus: Beta-ketoacyl-[acyl-carrier-protein] synthase III (320 aa).

Catalysis depends on residues cysteine 114 and histidine 247. The tract at residues 248–252 (QANRR) is ACP-binding. The active site involves asparagine 277.

The protein belongs to the thiolase-like superfamily. FabH family. In terms of assembly, homodimer.

The protein resides in the cytoplasm. It carries out the reaction malonyl-[ACP] + acetyl-CoA + H(+) = 3-oxobutanoyl-[ACP] + CO2 + CoA. The protein operates within lipid metabolism; fatty acid biosynthesis. Catalyzes the condensation reaction of fatty acid synthesis by the addition to an acyl acceptor of two carbons from malonyl-ACP. Catalyzes the first condensation reaction which initiates fatty acid synthesis and may therefore play a role in governing the total rate of fatty acid production. Possesses both acetoacetyl-ACP synthase and acetyl transacylase activities. Its substrate specificity determines the biosynthesis of branched-chain and/or straight-chain of fatty acids. In Neisseria meningitidis serogroup C (strain 053442), this protein is Beta-ketoacyl-[acyl-carrier-protein] synthase III.